A 168-amino-acid chain; its full sequence is Large ribosomal subunit protein uL5 (168 aa).

Belongs to the universal ribosomal protein uL5 family. As to quaternary structure, part of the 50S ribosomal subunit; contacts the 5S rRNA and probably tRNA. Forms a bridge to the 30S subunit in the 70S ribosome.

This is one of the proteins that bind and probably mediate the attachment of the 5S RNA into the large ribosomal subunit, where it forms part of the central protuberance. In the 70S ribosome it contacts protein S13 of the 30S subunit (bridge B1b), connecting the 2 subunits; this bridge is implicated in subunit movement. May contact the P site tRNA; the 5S rRNA and some of its associated proteins might help stabilize positioning of ribosome-bound tRNAs. This is Large ribosomal subunit protein uL5 from Methanosphaera stadtmanae (strain ATCC 43021 / DSM 3091 / JCM 11832 / MCB-3).